We begin with the raw amino-acid sequence, 503 residues long: Maturase K (503 aa).

This sequence belongs to the intron maturase 2 family. MatK subfamily.

The protein resides in the plastid. It localises to the chloroplast. Functionally, usually encoded in the trnK tRNA gene intron. Probably assists in splicing its own and other chloroplast group II introns. This chain is Maturase K, found in Rosa canina (Dog rose).